A 525-amino-acid polypeptide reads, in one-letter code: ATP synthase subunit alpha (525 aa).

169 to 176 (GDRQTGKT) is an ATP binding site.

The protein belongs to the ATPase alpha/beta chains family. As to quaternary structure, F-type ATPases have 2 components, CF(1) - the catalytic core - and CF(0) - the membrane proton channel. CF(1) has five subunits: alpha(3), beta(3), gamma(1), delta(1), epsilon(1). CF(0) has three main subunits: a(1), b(2) and c(9-12). The alpha and beta chains form an alternating ring which encloses part of the gamma chain. CF(1) is attached to CF(0) by a central stalk formed by the gamma and epsilon chains, while a peripheral stalk is formed by the delta and b chains.

It localises to the cell membrane. The catalysed reaction is ATP + H2O + 4 H(+)(in) = ADP + phosphate + 5 H(+)(out). In terms of biological role, produces ATP from ADP in the presence of a proton gradient across the membrane. The alpha chain is a regulatory subunit. The sequence is that of ATP synthase subunit alpha from Mycoplasma mycoides subsp. mycoides SC (strain CCUG 32753 / NCTC 10114 / PG1).